Here is a 219-residue protein sequence, read N- to C-terminus: MLRAGAPTAGSFRTKEVHTGTTIMAVEFDGGVVVGSDSRVSAGEAVVNRVFDKLSPLHQRIFCALSGSAADAQAIADMAAYQLELHGLELEEPPLVLAAANVVKNISYKYREDLLAHLIVAGWDQREGGQVYGTMGGMLIRQPFTIGGSGSSYIYGYVDAAYKPGMTSEECRRFTTNAITLAMNRDGSSGGVIYLVTITVAGVDHRVILGDELPKFYDE.

The propeptide at 1-20 (MLRAGAPTAGSFRTKEVHTG) is removed in mature form. T21 serves as the catalytic Nucleophile. 2 positions are modified to N6-acetyllysine: K53 and K109.

This sequence belongs to the peptidase T1B family. As to quaternary structure, the 26S proteasome consists of a 20S proteasome core and two 19S regulatory subunits. The 20S proteasome core is composed of 28 subunits that are arranged in four stacked rings, resulting in a barrel-shaped structure. The two end rings are each formed by seven alpha subunits, and the two central rings are each formed by seven beta subunits. The catalytic chamber with the active sites is on the inside of the barrel. Component of the immunoproteasome, where it displaces the equivalent housekeeping subunit PSMB6. Component of the spermatoproteasome, a form of the proteasome specifically found in testis. Post-translationally, autocleaved. The resulting N-terminal Thr residue of the mature subunit is responsible for the nucleophile proteolytic activity.

The protein resides in the cytoplasm. The protein localises to the nucleus. The catalysed reaction is Cleavage of peptide bonds with very broad specificity.. Its function is as follows. The proteasome is a multicatalytic proteinase complex which is characterized by its ability to cleave peptides with Arg, Phe, Tyr, Leu, and Glu adjacent to the leaving group at neutral or slightly basic pH. The proteasome has an ATP-dependent proteolytic activity. This subunit is involved in antigen processing to generate class I binding peptides. In Mus platythrix (Flat-haired mouse), this protein is Proteasome subunit beta type-9 (Psmb9).